The following is a 43-amino-acid chain: Neurotrophin-4 (43 aa).

The protein belongs to the NGF-beta family.

In terms of biological role, NT-4 could play a role in oogenesis and/or early embryogenesis. NT-4 interacts with the low affinity NGF receptor and elicits neurite outgrowth from explanted dorsal root ganglia with no and lower activity in sympathetic and nodose ganglia, respectively. This Macrovipera lebetinus (Levantine viper) protein is Neurotrophin-4 (NTF4).